Reading from the N-terminus, the 120-residue chain is Aspartate 1-decarboxylase (120 aa).

The active-site Schiff-base intermediate with substrate; via pyruvic acid is the serine 25. Serine 25 bears the Pyruvic acid (Ser) mark. Threonine 57 provides a ligand contact to substrate. Tyrosine 58 acts as the Proton donor in catalysis. Residue 73–75 participates in substrate binding; it reads GAA.

This sequence belongs to the PanD family. Heterooctamer of four alpha and four beta subunits. Requires pyruvate as cofactor. Is synthesized initially as an inactive proenzyme, which is activated by self-cleavage at a specific serine bond to produce a beta-subunit with a hydroxyl group at its C-terminus and an alpha-subunit with a pyruvoyl group at its N-terminus.

It localises to the cytoplasm. It catalyses the reaction L-aspartate + H(+) = beta-alanine + CO2. It participates in cofactor biosynthesis; (R)-pantothenate biosynthesis; beta-alanine from L-aspartate: step 1/1. In terms of biological role, catalyzes the pyruvoyl-dependent decarboxylation of aspartate to produce beta-alanine. This is Aspartate 1-decarboxylase from Ralstonia nicotianae (strain ATCC BAA-1114 / GMI1000) (Ralstonia solanacearum).